Consider the following 1171-residue polypeptide: Kinesin-like protein GA13060 (1171 aa).

Positions 1–24 (MASSISRNGGFCGALQRAPPPMPP) are disordered. In terms of domain architecture, Kinesin motor spans 40–400 (KVKVMLRVSD…IQIASRIHRL (361 aa)). Disordered regions lie at residues 737–774 (LLGQDMSLPPDGDEDQDSGPSEVPPALPLFDDPLGSRD), 798–820 (LVASRASSSHHQHQHHRPSSQRS), 932–955 (PAYRLTPSPPKQPSHSPSQGSLPS), 1043–1099 (TSSE…QRHR), and 1124–1143 (RHSHGVGGHKKHRHRHEGNG). Basic residues predominate over residues 805–816 (SSHHQHQHHRPS). Polar residues predominate over residues 1043 to 1059 (TSSEAYDSGHDSNSTPR). The segment covering 1124 to 1139 (RHSHGVGGHKKHRHRH) has biased composition (basic residues).

This sequence belongs to the TRAFAC class myosin-kinesin ATPase superfamily. Kinesin family. KIF26 subfamily.

The protein resides in the cytoplasm. Its subcellular location is the cytoskeleton. In Drosophila pseudoobscura pseudoobscura (Fruit fly), this protein is Kinesin-like protein GA13060.